Here is a 231-residue protein sequence, read N- to C-terminus: Octanoyltransferase (231 aa).

The 203-residue stretch at 29–231 (PQDPDLLWLC…GRQLCIWLAP (203 aa)) folds into the BPL/LPL catalytic domain. Substrate is bound by residues 68 to 75 (RGGQVTFH), 164 to 166 (ALG), and 177 to 179 (GVA). The Acyl-thioester intermediate role is filled by Cys-195.

The protein belongs to the LipB family.

It is found in the cytoplasm. The catalysed reaction is octanoyl-[ACP] + L-lysyl-[protein] = N(6)-octanoyl-L-lysyl-[protein] + holo-[ACP] + H(+). The protein operates within protein modification; protein lipoylation via endogenous pathway; protein N(6)-(lipoyl)lysine from octanoyl-[acyl-carrier-protein]: step 1/2. In terms of biological role, catalyzes the transfer of endogenously produced octanoic acid from octanoyl-acyl-carrier-protein onto the lipoyl domains of lipoate-dependent enzymes. Lipoyl-ACP can also act as a substrate although octanoyl-ACP is likely to be the physiological substrate. This is Octanoyltransferase from Verminephrobacter eiseniae (strain EF01-2).